The sequence spans 104 residues: MSTYAIIKTGGKQVKVEVGQAIYVEKIDAEAGAEVTFNEVVLVGGDKTVVGTPIVEGATVVGTVEKQGKQKKVVTFKYKPKKGSHRKQGHRQPYTKIVIDAINA.

Belongs to the bacterial ribosomal protein bL21 family. As to quaternary structure, part of the 50S ribosomal subunit. Contacts protein L20.

This protein binds to 23S rRNA in the presence of protein L20. The polypeptide is Large ribosomal subunit protein bL21 (Streptococcus uberis (strain ATCC BAA-854 / 0140J)).